The primary structure comprises 450 residues: Tubulin beta-3 chain (450 aa).

The short motif at 1–4 (MREI) is the MREI motif element. Positions 11, 69, 138, 142, 143, and 144 each coordinate GTP. Glu-69 is a Mg(2+) binding site. A Phosphoserine; by CDK1 modification is found at Ser-172. GTP-binding residues include Asn-204 and Asn-226. Positions 422–450 (YQQYQDATAEEEGEMYEDDDEESEAQGPK) are disordered. The segment covering 429–450 (TAEEEGEMYEDDDEESEAQGPK) has biased composition (acidic residues). At Glu-438 the chain carries 5-glutamyl polyglutamate. At Ser-444 the chain carries Phosphoserine.

The protein belongs to the tubulin family. Heterodimer of alpha- and beta-tubulin. A typical microtubule is a hollow water-filled tube with an outer diameter of 25 nm and an inner diameter of 15 nM. Alpha-beta heterodimers associate head-to-tail to form protofilaments running lengthwise along the microtubule wall with the beta-tubulin subunit facing the microtubule plus end conferring a structural polarity. Microtubules usually have 13 protofilaments but different protofilament numbers can be found in some organisms and specialized cells. Interacts with gamma-tubulin; the interaction allows microtubules to nucleate from the gamma-tubulin ring complex (gTuRC). Interacts with UNC5C (via cytoplasmic domain); this interaction is decreased by NTN1/Netrin-1. Interacts with NLRP5/MATER at cytoskeleton microtubules. Interacts with DPYSL5. Interacts with CFAP61. The cofactor is Mg(2+). Post-translationally, some glutamate residues at the C-terminus are polyglycylated, resulting in polyglycine chains on the gamma-carboxyl group. Glycylation is mainly limited to tubulin incorporated into axonemes (cilia and flagella) whereas glutamylation is prevalent in neuronal cells, centrioles, axonemes, and the mitotic spindle. Both modifications can coexist on the same protein on adjacent residues, and lowering polyglycylation levels increases polyglutamylation, and reciprocally. Cilia and flagella glycylation is required for their stability and maintenance. Flagella glycylation controls sperm motility. Some glutamate residues at the C-terminus are polyglutamylated, resulting in polyglutamate chains on the gamma-carboxyl group. Polyglutamylation plays a key role in microtubule severing by spastin (SPAST). SPAST preferentially recognizes and acts on microtubules decorated with short polyglutamate tails: severing activity by SPAST increases as the number of glutamates per tubulin rises from one to eight, but decreases beyond this glutamylation threshold. Glutamylation is also involved in cilia motility. In terms of processing, phosphorylated on Ser-172 by CDK1 during the cell cycle, from metaphase to telophase, but not in interphase. This phosphorylation inhibits tubulin incorporation into microtubules.

The protein localises to the cytoplasm. It localises to the cytoskeleton. The protein resides in the cell projection. Its subcellular location is the growth cone. It is found in the lamellipodium. The protein localises to the filopodium. Tubulin is the major constituent of microtubules, protein filaments consisting of alpha- and beta-tubulin heterodimers. Microtubules grow by the addition of GTP-tubulin dimers to the microtubule end, where a stabilizing cap forms. Below the cap, alpha-beta tubulin heterodimers are in GDP-bound state, owing to GTPase activity of alpha-tubulin. TUBB3 plays a critical role in proper axon guidance and maintenance. Binding of NTN1/Netrin-1 to its receptor UNC5C might cause dissociation of UNC5C from polymerized TUBB3 in microtubules and thereby lead to increased microtubule dynamics and axon repulsion. Plays a role in dorsal root ganglion axon projection towards the spinal cord. This Rattus norvegicus (Rat) protein is Tubulin beta-3 chain (Tubb3).